The chain runs to 90 residues: MAVKIRLKRMGAKKTPFYRVVVADSRSPRDGRFIEEIGTYNPVAQPAEVKINEEAALKWLGNGAKPSDTVRNLFSNQGIMEKFHLSKQGK.

It belongs to the bacterial ribosomal protein bS16 family.

The polypeptide is Small ribosomal subunit protein bS16 (Bacillus anthracis (strain A0248)).